A 367-amino-acid polypeptide reads, in one-letter code: MSNKKVLMLMSGGVDSSVAAYLLKEQNYHVIGLHFKTVSDVVFSLIPEKKKVCCSPSDTQDALKIADKLDLDDFQIVDIKKEFKEKIIDYFIKTYKEGKTPNPCMLCNRFFKFGKALEIAHSYGADWVSSGHYLIKEYSNKYSTYIIKKGVDQYKDQSYFLSYIDKNTLPKLHFPLGNMYKVEIRDIANKIGLSVANKPDSQELCFIPDNDYRRFLKENGVTTEEGKVYDLEGNEIGTHTGYMNYTIGQRSGISYYKNANVKLHVYKIFPQKNVLIVAPTEEMYSKELIVQNVNFFVDFKEIEGFCRVRKKSEEKPAVVKKIADHTLKVSFKEPIFAVTPGQFATIYDESGVVLASGVINIKEMGEV.

ATP-binding positions include 9–16 (LMSGGVDS) and F35. The Nucleophile role is filled by C107. The cysteines at positions 107 and 205 are disulfide-linked. Position 131 (G131) interacts with ATP. The interval 155-157 (KDQ) is interaction with tRNA. Catalysis depends on C205, which acts as the Cysteine persulfide intermediate.

It belongs to the MnmA/TRMU family.

Its subcellular location is the cytoplasm. The catalysed reaction is S-sulfanyl-L-cysteinyl-[protein] + uridine(34) in tRNA + AH2 + ATP = 2-thiouridine(34) in tRNA + L-cysteinyl-[protein] + A + AMP + diphosphate + H(+). Its function is as follows. Catalyzes the 2-thiolation of uridine at the wobble position (U34) of tRNA, leading to the formation of s(2)U34. The chain is tRNA-specific 2-thiouridylase MnmA from Petrotoga mobilis (strain DSM 10674 / SJ95).